The primary structure comprises 332 residues: MKVAVLGAGAWGTALAGHLAARHDTLLWARDAALIAGLQARHENSRYLDGIALPDALRYDADLGAALAHGAADDALCVIAAPVAGLRTLCHAMRDAGCVPAHVVWVCKGFEADTHLLPHQVIAAELPEQHSNGVLSGPSFAREVGQSLPVALTVASTSAECRERTLAAFHHGAMRIYTGDDVVGVEVGGAVKNVLAIATGIADGLGLGLNARAALITRGLAEMSRLGVALGGRAETFTGLTGLGDLILTATGDLSRNRTVGLQLAAGRTLNDILGALGHVAEGVRCAQAVLAIARAQSIEMPITEAVCGVLFDGIAPRDAVSGLLRRDARAE.

NADPH is bound by residues Trp-11, Arg-30, and Lys-108. Sn-glycerol 3-phosphate contacts are provided by Lys-108, Gly-137, and Ser-139. Residue Ala-141 participates in NADPH binding. Sn-glycerol 3-phosphate-binding residues include Lys-192, Asp-245, Ser-255, Arg-256, and Asn-257. Lys-192 functions as the Proton acceptor in the catalytic mechanism. Position 256 (Arg-256) interacts with NADPH. NADPH-binding residues include Val-280 and Glu-282.

This sequence belongs to the NAD-dependent glycerol-3-phosphate dehydrogenase family.

It localises to the cytoplasm. It catalyses the reaction sn-glycerol 3-phosphate + NAD(+) = dihydroxyacetone phosphate + NADH + H(+). The catalysed reaction is sn-glycerol 3-phosphate + NADP(+) = dihydroxyacetone phosphate + NADPH + H(+). Its pathway is membrane lipid metabolism; glycerophospholipid metabolism. Its function is as follows. Catalyzes the reduction of the glycolytic intermediate dihydroxyacetone phosphate (DHAP) to sn-glycerol 3-phosphate (G3P), the key precursor for phospholipid synthesis. The chain is Glycerol-3-phosphate dehydrogenase [NAD(P)+] from Burkholderia lata (strain ATCC 17760 / DSM 23089 / LMG 22485 / NCIMB 9086 / R18194 / 383).